An 83-amino-acid chain; its full sequence is Large ribosomal subunit protein bL27c (83 aa).

The disordered stretch occupies residues 1 to 21; it reads MAHKKGAGSTKNGRDSNAKRL.

The protein belongs to the bacterial ribosomal protein bL27 family.

The protein localises to the plastid. It localises to the chloroplast. The polypeptide is Large ribosomal subunit protein bL27c (Phaeodactylum tricornutum (strain CCAP 1055/1)).